Here is a 240-residue protein sequence, read N- to C-terminus: Peptidyl-tRNA hydrolase (240 aa).

Tyr-14 serves as a coordination point for tRNA. The active-site Proton acceptor is the His-19. 3 residues coordinate tRNA: Tyr-64, Asn-66, and Asn-112. Residues 190-204 (KADEEKPRKDSEKKP) show a composition bias toward basic and acidic residues. Residues 190 to 240 (KADEEKPRKDSEKKPAGQSHIRQARNNNQPKLPATGPMADMLKKMFGNKGE) are disordered. Over residues 209-219 (HIRQARNNNQP) the composition is skewed to polar residues.

It belongs to the PTH family. Monomer.

Its subcellular location is the cytoplasm. It carries out the reaction an N-acyl-L-alpha-aminoacyl-tRNA + H2O = an N-acyl-L-amino acid + a tRNA + H(+). Hydrolyzes ribosome-free peptidyl-tRNAs (with 1 or more amino acids incorporated), which drop off the ribosome during protein synthesis, or as a result of ribosome stalling. Functionally, catalyzes the release of premature peptidyl moieties from peptidyl-tRNA molecules trapped in stalled 50S ribosomal subunits, and thus maintains levels of free tRNAs and 50S ribosomes. The polypeptide is Peptidyl-tRNA hydrolase (Rhizobium etli (strain ATCC 51251 / DSM 11541 / JCM 21823 / NBRC 15573 / CFN 42)).